Here is a 423-residue protein sequence, read N- to C-terminus: COP9 signalosome complex subunit 3 (423 aa).

A2 carries the post-translational modification N-acetylalanine. Residues 197 to 365 (NFERALYFYE…GMVSFHDNPE (169 aa)) form the PCI domain. The tract at residues 402–423 (QFVQKSMGSQEDDSGNKPSSYS) is disordered. S407, S410, and S423 each carry phosphoserine.

This sequence belongs to the CSN3 family. Component of the CSN complex, composed of COPS1/GPS1, COPS2, COPS3, COPS4, COPS5, COPS6, COPS7 (COPS7A or COPS7B), COPS8 and COPS9. In the complex, it probably interacts directly with COPS1, COPS4, COPS8 and COPS9. Interacts with CK2 and PKD. Interacts with the translation initiation factor EIF3S6 and IKBKG. Interacts with ERCC6.

The protein localises to the cytoplasm. It localises to the nucleus. Its function is as follows. Component of the COP9 signalosome complex (CSN), a complex involved in various cellular and developmental processes. The CSN complex is an essential regulator of the ubiquitin (Ubl) conjugation pathway by mediating the deneddylation of the cullin subunits of SCF-type E3 ligase complexes, leading to decrease the Ubl ligase activity of SCF-type complexes such as SCF, CSA or DDB2. The complex is also involved in phosphorylation of p53/TP53, c-jun/JUN, IkappaBalpha/NFKBIA, ITPK1 and IRF8/ICSBP, possibly via its association with CK2 and PKD kinases. CSN-dependent phosphorylation of TP53 and JUN promotes and protects degradation by the Ubl system, respectively. Essential to maintain the survival of epiblast cells and thus the development of the postimplantation embryo. This Bos taurus (Bovine) protein is COP9 signalosome complex subunit 3 (COPS3).